We begin with the raw amino-acid sequence, 86 residues long: Omega-theraphotoxin-Hhn1b (86 aa).

Positions 1–21 are cleaved as a signal peptide; sequence MKSIVFVALFGLALLAVVCSA. The propeptide occupies 22–50; the sequence is SEDAHKELLKEVVRAMVVDKTDAVQAEER. Intrachain disulfides connect C52–C66, C59–C71, and C65–C78.

The protein belongs to the neurotoxin 10 (Hwtx-1) family. 17 (Hntx-9) subfamily. Expressed by the venom gland.

Its subcellular location is the secreted. Its function is as follows. Ion channel inhibitor. In Cyriopagopus hainanus (Chinese bird spider), this protein is Omega-theraphotoxin-Hhn1b.